Reading from the N-terminus, the 158-residue chain is Transcription elongation factor GreA (158 aa).

Residues 47-74 adopt a coiled-coil conformation; it reads AEYHAAKEEQSHNEGRIAELEDKLARAD.

This sequence belongs to the GreA/GreB family.

Necessary for efficient RNA polymerase transcription elongation past template-encoded arresting sites. The arresting sites in DNA have the property of trapping a certain fraction of elongating RNA polymerases that pass through, resulting in locked ternary complexes. Cleavage of the nascent transcript by cleavage factors such as GreA or GreB allows the resumption of elongation from the new 3'terminus. GreA releases sequences of 2 to 3 nucleotides. The chain is Transcription elongation factor GreA from Bradyrhizobium sp. (strain BTAi1 / ATCC BAA-1182).